The following is a 440-amino-acid chain: MDKRSIMKYERSQKLFEASQEVIPGGVNSPVRAFSSVGMNPPFIKRGKGAYIYDEDGNKYIDYVGSWGPLILGHCHPEVVENLKAVLETGTSFGAPTEIELKIAELITGAIPSVEMIRMVNSGTEATMTALRLARGYTGRNKIVKFNGNYHGHSDGLLIKAGSGALTHGVPNSPGVTPDVAKNTITAKYNDIEGIMEIFKQQGEEIAAVIIEPIAGNMGVVPMTNKFAHALRKITEDYGALLIFDEVMTGFRVSFGGAQSLYQIKPDLTCFGKIIGGGLPVGAFGGKREIMEHLSPVGPVYQAGTLSGNPLAMTAGYTTLSILHNNSGIYEELEKKAQKLEKGFKKIVKELQIDASFNRVGSMLCMFFTKEKVSDLETASTSNTEIYSQYFRAMLSRGVYLAPTQFETMFISDAHGDVEINRTIEAAYEGLKEIRNNPSI.

Lys273 is subject to N6-(pyridoxal phosphate)lysine.

The protein belongs to the class-III pyridoxal-phosphate-dependent aminotransferase family. HemL subfamily. As to quaternary structure, homodimer. Pyridoxal 5'-phosphate serves as cofactor.

Its subcellular location is the cytoplasm. It catalyses the reaction (S)-4-amino-5-oxopentanoate = 5-aminolevulinate. It functions in the pathway porphyrin-containing compound metabolism; protoporphyrin-IX biosynthesis; 5-aminolevulinate from L-glutamyl-tRNA(Glu): step 2/2. The sequence is that of Glutamate-1-semialdehyde 2,1-aminomutase from Alkaliphilus metalliredigens (strain QYMF).